The following is a 370-amino-acid chain: tRNA (guanine(26)-N(2))-dimethyltransferase (370 aa).

Residues 4–368 (TWVTEGRTTI…APLEEIRDCI (365 aa)) enclose the Trm1 methyltransferase domain. 5 residues coordinate S-adenosyl-L-methionine: Arg41, Arg66, Asp82, Asp108, and Ala109. The Zn(2+) site is built by Cys237, Cys240, Cys256, and Cys259.

Belongs to the class I-like SAM-binding methyltransferase superfamily. Trm1 family.

The enzyme catalyses guanosine(26) in tRNA + 2 S-adenosyl-L-methionine = N(2)-dimethylguanosine(26) in tRNA + 2 S-adenosyl-L-homocysteine + 2 H(+). Its function is as follows. Dimethylates a single guanine residue at position 26 of a number of tRNAs using S-adenosyl-L-methionine as donor of the methyl groups. The polypeptide is tRNA (guanine(26)-N(2))-dimethyltransferase (Methanospirillum hungatei JF-1 (strain ATCC 27890 / DSM 864 / NBRC 100397 / JF-1)).